The chain runs to 311 residues: Protoheme IX farnesyltransferase 1 (311 aa).

Transmembrane regions (helical) follow at residues 31–51, 52–72, 97–117, 119–139, 152–172, 179–199, 225–245, 247–267, and 281–301; these read VMAL…GAVN, PVIA…AGAL, VTPG…VMTL, VLVG…YIVI, IVIG…AATG, LVLF…LALF, ILAY…FGFT, GYYG…SWKV, and LFAY…ADTI.

This sequence belongs to the UbiA prenyltransferase family. Protoheme IX farnesyltransferase subfamily.

The protein localises to the cell inner membrane. It catalyses the reaction heme b + (2E,6E)-farnesyl diphosphate + H2O = Fe(II)-heme o + diphosphate. It functions in the pathway porphyrin-containing compound metabolism; heme O biosynthesis; heme O from protoheme: step 1/1. Its function is as follows. Converts heme B (protoheme IX) to heme O by substitution of the vinyl group on carbon 2 of heme B porphyrin ring with a hydroxyethyl farnesyl side group. The chain is Protoheme IX farnesyltransferase 1 from Mesorhizobium japonicum (strain LMG 29417 / CECT 9101 / MAFF 303099) (Mesorhizobium loti (strain MAFF 303099)).